The sequence spans 417 residues: Gamma-glutamyl phosphate reductase (417 aa).

The protein belongs to the gamma-glutamyl phosphate reductase family.

It is found in the cytoplasm. The enzyme catalyses L-glutamate 5-semialdehyde + phosphate + NADP(+) = L-glutamyl 5-phosphate + NADPH + H(+). It functions in the pathway amino-acid biosynthesis; L-proline biosynthesis; L-glutamate 5-semialdehyde from L-glutamate: step 2/2. In terms of biological role, catalyzes the NADPH-dependent reduction of L-glutamate 5-phosphate into L-glutamate 5-semialdehyde and phosphate. The product spontaneously undergoes cyclization to form 1-pyrroline-5-carboxylate. In Desulfitobacterium hafniense (strain DSM 10664 / DCB-2), this protein is Gamma-glutamyl phosphate reductase.